A 286-amino-acid chain; its full sequence is Energy-coupling factor transporter ATP-binding protein EcfA2 (286 aa).

An ABC transporter domain is found at 3–246 (IQFNQVSYIY…KTQLLKWHIE (244 aa)). 40–47 (GQTGSGKS) contributes to the ATP binding site.

This sequence belongs to the ABC transporter superfamily. Energy-coupling factor EcfA family. Forms a stable energy-coupling factor (ECF) transporter complex composed of 2 membrane-embedded substrate-binding proteins (S component), 2 ATP-binding proteins (A component) and 2 transmembrane proteins (T component).

It is found in the cell membrane. Its function is as follows. ATP-binding (A) component of a common energy-coupling factor (ECF) ABC-transporter complex. Unlike classic ABC transporters this ECF transporter provides the energy necessary to transport a number of different substrates. In Staphylococcus epidermidis (strain ATCC 35984 / DSM 28319 / BCRC 17069 / CCUG 31568 / BM 3577 / RP62A), this protein is Energy-coupling factor transporter ATP-binding protein EcfA2.